The following is a 152-amino-acid chain: D-aminoacyl-tRNA deacylase (152 aa).

The Gly-cisPro motif, important for rejection of L-amino acids motif lies at 137 to 138 (GP).

Belongs to the DTD family. As to quaternary structure, homodimer.

The protein localises to the cytoplasm. The catalysed reaction is glycyl-tRNA(Ala) + H2O = tRNA(Ala) + glycine + H(+). The enzyme catalyses a D-aminoacyl-tRNA + H2O = a tRNA + a D-alpha-amino acid + H(+). Functionally, an aminoacyl-tRNA editing enzyme that deacylates mischarged D-aminoacyl-tRNAs. Also deacylates mischarged glycyl-tRNA(Ala), protecting cells against glycine mischarging by AlaRS. Acts via tRNA-based rather than protein-based catalysis; rejects L-amino acids rather than detecting D-amino acids in the active site. By recycling D-aminoacyl-tRNA to D-amino acids and free tRNA molecules, this enzyme counteracts the toxicity associated with the formation of D-aminoacyl-tRNA entities in vivo and helps enforce protein L-homochirality. The chain is D-aminoacyl-tRNA deacylase from Thermus aquaticus.